A 245-amino-acid chain; its full sequence is Octopine transport system permease protein OccM (245 aa).

5 helical membrane passes run Phe-12–Val-32, Phe-57–Gly-77, Ala-96–Met-116, Val-163–Ile-183, and Ala-199–Ile-219. The ABC transmembrane type-1 domain occupies Ile-19–Phe-216.

It belongs to the binding-protein-dependent transport system permease family. HisMQ subfamily.

The protein resides in the cell inner membrane. Component of the octopine active transport system probably consisting of four subunits: Q, M, P and T. This Rhizobium meliloti (Ensifer meliloti) protein is Octopine transport system permease protein OccM (occM).